A 642-amino-acid polypeptide reads, in one-letter code: MQVAGKELEVQQGALCGEVLKEALSKKQFKNVVVAKCGDTLLDLTTTVPADCTDLEPVMADSKEGLEVIRHSTAHLMAEAVKKLFPTAKVTIGPSIASGFYYDFDYERPFTPEDLEAIEAEMLRRVGANEEFTREVLSSADALKKFEEMGEDYKIELINDLGEETVSVYTNGEFADLCRGPHVARTGMLKAFKLLSVAGAYWRGDENRQQLQRIYGTAFPDPKALKKHLAQIEEAKKRDHRKLGTQLDLFSVNPEVGAGMTIWHPKGALIRAILEDFERKEHLKRGYQFVQGPLILKRELWEKSGHYDNYRENMYFTEIDEQSYGIKPMNCLSHMLVFKSRLRSYRDLPQRYFEHGVVHRHEKSGVLHGLLRVRTFTQDDAHLICRPDQLRDEIIGVAKFVGDVMGLFGFEYEAEVSTKPEKAIGSDEDWDRATEALEGALKEMGMEYSINEGDGAFYGPKIDIIIKDALERRWQCATIQCDFTLPERFDLSYVGEDGERHRPVMLHRVILGSIERFIGVLLEHTGGALPAWLSPVQAKILTVTDSQNEFAQKVLQFLREKGIRAEVDDRNEKLGYKVREAQLEKIPYMLVIGDKEVAAESVNVRARDGEDPGLKSLEEAAELISTAIDEPFKRGGMSYSFS.

Residues 1–58 form the TGS domain; that stretch reads MQVAGKELEVQQGALCGEVLKEALSKKQFKNVVVAKCGDTLLDLTTTVPADCTDLEPV. The catalytic stretch occupies residues 239–530; it reads DHRKLGTQLD…LLEHTGGALP (292 aa). Positions 331, 382, and 507 each coordinate Zn(2+).

The protein belongs to the class-II aminoacyl-tRNA synthetase family. As to quaternary structure, homodimer. It depends on Zn(2+) as a cofactor.

It is found in the cytoplasm. It catalyses the reaction tRNA(Thr) + L-threonine + ATP = L-threonyl-tRNA(Thr) + AMP + diphosphate + H(+). In terms of biological role, catalyzes the attachment of threonine to tRNA(Thr) in a two-step reaction: L-threonine is first activated by ATP to form Thr-AMP and then transferred to the acceptor end of tRNA(Thr). Also edits incorrectly charged L-seryl-tRNA(Thr). The polypeptide is Threonine--tRNA ligase (Maridesulfovibrio salexigens (strain ATCC 14822 / DSM 2638 / NCIMB 8403 / VKM B-1763) (Desulfovibrio salexigens)).